The sequence spans 137 residues: Small ribosomal subunit protein bS16 (137 aa).

Basic and acidic residues-rich tracts occupy residues 80–99 and 111–125; these read KSPEEAQKGGMRKGEFKRLQ and VATEEPKAEEAKEAP. The segment at 80-137 is disordered; that stretch reads KSPEEAQKGGMRKGEFKRLQAEQAAKAQKKAVATEEPKAEEAKEAPPAESQAAEGKEE. Residues 126-137 are compositionally biased toward low complexity; sequence PAESQAAEGKEE.

This sequence belongs to the bacterial ribosomal protein bS16 family.

This chain is Small ribosomal subunit protein bS16, found in Coxiella burnetii (strain Dugway 5J108-111).